A 322-amino-acid polypeptide reads, in one-letter code: MEKQYRVLLYYQYVPIEDPETFTAEHLAFCKELGLLGRILISSEGINGTVSGTIEQTDKYMEALKEDPRFASMPIKIDEADGHAFKKMHVRHRNELVNLSLEDDVNPLELTGKHLSPVEFYEQMQSPDTVVIDARNDYEFDVGHFRGAVRPDIETFRELPEWIRDNKEILEGKKILTYCTGGVRCEKFSGWLKREGFEDVSQLDGGIVTYGKDPEVQGKLWDGQCYVFDTRLTVPVNQTEHVVVGKDFFTGEPCERYVNCANPACNRKMIATEESEHKYMRSCSHECRTSERNLYVKQHNLSEEEVQERLAVIEQEQAISQG.

One can recognise a Rhodanese domain in the interval 125 to 219 (QSPDTVVIDA…YGKDPEVQGK (95 aa)). The active-site Cysteine persulfide intermediate is C179.

This sequence belongs to the TrhO family.

It carries out the reaction uridine(34) in tRNA + AH2 + O2 = 5-hydroxyuridine(34) in tRNA + A + H2O. Functionally, catalyzes oxygen-dependent 5-hydroxyuridine (ho5U) modification at position 34 in tRNAs. This chain is tRNA uridine(34) hydroxylase, found in Bacillus pumilus (strain SAFR-032).